Here is a 1112-residue protein sequence, read N- to C-terminus: Zinc finger protein 654 (1112 aa).

The segment at 482–514 (PSSSLKKRVDQQSVEEDQSTGETDPDDASVVQP) is disordered. The segment covering 494-508 (SVEEDQSTGETDPDD) has biased composition (acidic residues). 5 consecutive C2H2-type zinc fingers follow at residues 566-588 (FACV…LKNH), 738-763 (FKCP…RTVH), 779-801 (GKCK…LNRH), 807-831 (YFCL…TKSH), and 836-860 (AQCS…EAQH). 2 disordered regions span residues 885–906 (FSNE…KYST) and 997–1018 (VESQ…NLTS). 2 stretches are compositionally biased toward polar residues: residues 886–899 (SNEN…VSTS) and 1002–1018 (HSAL…NLTS). Phosphoserine is present on residues Ser-1107 and Ser-1111.

Belongs to the krueppel C2H2-type zinc-finger protein family.

Its subcellular location is the nucleus. Functionally, may be involved in transcriptional regulation. The polypeptide is Zinc finger protein 654 (Mus musculus (Mouse)).